A 392-amino-acid chain; its full sequence is Integrin-linked kinase-associated serine/threonine phosphatase 2C (392 aa).

Met1 is subject to N-acetylmethionine. Residues 1–91 (MDLFGDLPEP…PEEEKNGGEE (91 aa)) are disordered. Low complexity predominate over residues 31-40 (DLPPTSSTDS). The span at 59–70 (SGSLATSGSQVV) shows a compositional bias: polar residues. A compositionally biased stretch (basic and acidic residues) spans 72–91 (NEGKGAKRKAPEEEKNGGEE). The PPM-type phosphatase domain maps to 108–390 (KGYVAERKGE…DNVTVMVVRI (283 aa)). Mn(2+) contacts are provided by Asp152 and Gly153. Lys210 carries the N6-acetyllysine modification. Residues Asp326 and Asp381 each contribute to the Mn(2+) site.

This sequence belongs to the PP2C family. In terms of assembly, interacts with ILK. Mg(2+) serves as cofactor. It depends on Mn(2+) as a cofactor. In terms of tissue distribution, widely expressed. Highest expression observed in kidney, liver and muscle.

The protein resides in the cytoplasm. It carries out the reaction O-phospho-L-seryl-[protein] + H2O = L-seryl-[protein] + phosphate. The enzyme catalyses O-phospho-L-threonyl-[protein] + H2O = L-threonyl-[protein] + phosphate. Functionally, protein phosphatase that may play a role in regulation of cell cycle progression via dephosphorylation of its substrates whose appropriate phosphorylation states might be crucial for cell proliferation. Selectively associates with integrin linked kinase (ILK), to modulate cell adhesion and growth factor signaling. Inhibits the ILK-GSK3B signaling axis and may play an important role in inhibiting oncogenic transformation. The polypeptide is Integrin-linked kinase-associated serine/threonine phosphatase 2C (Ilkap) (Rattus norvegicus (Rat)).